Reading from the N-terminus, the 368-residue chain is Propane 2-monooxygenase, hydroxylase component small subunit (368 aa).

A compositionally biased stretch (basic and acidic residues) spans 1 to 17; it reads MSAPEKPRERSFPKIEF. A disordered region spans residues 1 to 32; it reads MSAPEKPRERSFPKIEFTDSEAGAKEFPSSKS.

The protein belongs to the TmoE/XamoE family. In terms of assembly, the propane 2-monooxygenase multicomponent enzyme system is composed of an electron transfer component and a monooxygenase component interacting with the effector protein MimD. The electron transfer component is composed of a reductase (MimB), and the monooxygenase component is formed by a large subunit (MimA) and a small subunit (MimC). Requires the presence of the chaperonin-like protein MimG to ensure a productive folding, resulting of a soluble MimC, which leads to the active form of MimABCD.

The catalysed reaction is propane + NADH + O2 + H(+) = propan-2-ol + NAD(+) + H2O. It carries out the reaction acetone + NADH + O2 + H(+) = hydroxyacetone + NAD(+) + H2O. The enzyme catalyses butan-2-one + NADH + O2 + H(+) = 1-hydroxy-2-butanone + NAD(+) + H2O. It catalyses the reaction phenol + NADH + O2 + H(+) = hydroquinone + NAD(+) + H2O. Functionally, component of the propane 2-monooxygenase multicomponent enzyme system which is involved in the degradation of propane via the O2-dependent hydroxylation of propane. Also involved in the degradation of acetone via the O2-dependent hydroxylation of acetone. Also able to catalyze the oxidation of phenol, methylethylketone (2-butanone), 1-propanol and 2-propanol. The polypeptide is Propane 2-monooxygenase, hydroxylase component small subunit (Mycolicibacterium smegmatis (strain ATCC 700084 / mc(2)155) (Mycobacterium smegmatis)).